The primary structure comprises 911 residues: Desmoglein-1-gamma (911 aa).

A signal peptide spans 1–23 (MDWHSFRIAALLLTSLVVLEVNS). A propeptide spanning residues 24–49 (EFQIQVRDHNAKNGTIKWHSIRRQKR) is cleaved from the precursor. Cadherin domains follow at residues 50–157 (EWIK…PPVF), 158–269 (SMTT…IPYL), and 270–389 (EQSS…QPGS). The Extracellular portion of the chain corresponds to 50–519 (EWIKFAAACR…PNVDNVHFGP (470 aa)). N-linked (GlcNAc...) (high mannose) asparagine glycosylation is present at Asn110. N-linked (GlcNAc...) asparagine glycosylation occurs at Asn180. A glycan (N-linked (GlcNAc...) asparagine) is linked at Asn401. The chain crosses the membrane as a helical span at residues 520–540 (AGIGLLIMGFLVLGLVPFLLI). Residues 541 to 911 (SCDCGGAPGG…GMIGNLSIPP (371 aa)) are Cytoplasmic-facing. Desmoglein repeat repeat units follow at residues 783–809 (AYPS…TVRE), 810–839 (SYTT…ERVV), 840–869 (GPIS…ERVI), and 870–897 (APGS…ERVI). Residues 898 to 911 (QPTSGMIGNLSIPP) form a Desmoglein repeat 5; truncated repeat.

Interacts with DSC3; there is evidence to suggest that the interaction promotes cell-cell adhesion of keratinocytes. In terms of tissue distribution, expressed in epidermis, brain, liver, skeletal, muscle and testis.

It localises to the cell membrane. It is found in the cell junction. The protein resides in the desmosome. The protein localises to the cytoplasm. Its subcellular location is the nucleus. Its function is as follows. Component of intercellular desmosome junctions. Involved in the interaction of plaque proteins and intermediate filaments mediating cell-cell adhesion. In Mus musculus (Mouse), this protein is Desmoglein-1-gamma (Dsg1c).